The chain runs to 97 residues: Integration host factor subunit beta (97 aa).

This sequence belongs to the bacterial histone-like protein family. As to quaternary structure, heterodimer of an alpha and a beta chain.

This protein is one of the two subunits of integration host factor, a specific DNA-binding protein that functions in genetic recombination as well as in transcriptional and translational control. This Buchnera aphidicola subsp. Cinara cedri (strain Cc) protein is Integration host factor subunit beta.